Reading from the N-terminus, the 905-residue chain is FIGNL1-interacting regulator of recombination and mitosis (905 aa).

2 positions are modified to phosphoserine: S101 and S796. The residue at position 845 (K845) is an N6-acetyllysine.

As to quaternary structure, interacts (via its N-terminal region) with PLK1; controls PLK1 kinase activity. Interacts (via the KVVXF motif) with PPP1CC; controls PLK1 kinase activity. Interacts with FIGNL1; may regulate homologous recombination. Post-translationally, phosphorylation at Ser-101 by PLK1 strengthens FIRRM-PLK1 interaction. Phosphorylation at Ser-796 by PLK1 negatively regulates its interaction with PPP1CC.

It is found in the chromosome. Its subcellular location is the centromere. The protein resides in the kinetochore. It localises to the nucleus. The protein localises to the midbody. It is found in the cytoplasm. Its subcellular location is the cytoskeleton. The protein resides in the spindle. Functionally, regulates PLK1 kinase activity at kinetochores and promotes faithful chromosome segregation in prometaphase by bridging kinase and phosphatase activities. Phosphorylation of FIRRM by PLK1 negatively regulates its interaction with the phosphatase, PPP1CC, thus creating a negative feedback loop for maintaining proper PLK1 kinase activity during mitosis. In complex with FIGL1 may regulate homologous recombination. This chain is FIGNL1-interacting regulator of recombination and mitosis, found in Rattus norvegicus (Rat).